A 130-amino-acid chain; its full sequence is MFPGRMNPKMMRQMQKMMSDMGMDSKDIKVLKITMELEDKIMVFEKPKVQVMDVMGNKTYTITGRAKNIKKDDIKAEQKEQIKDEEVKLDITKEDIEMVVNQCEVSEEEAKKVLEECNGDIAEAILKLSQ.

Residues 8–75 (PKMMRQMQKM…AKNIKKDDIK (68 aa)) enclose the NAC-A/B domain.

The protein belongs to the NAC-alpha family. In terms of assembly, homodimer. Interacts with the ribosome. Binds ribosomal RNA.

Functionally, contacts the emerging nascent chain on the ribosome. The protein is Nascent polypeptide-associated complex protein of Methanococcus aeolicus (strain ATCC BAA-1280 / DSM 17508 / OCM 812 / Nankai-3).